The primary structure comprises 147 residues: UPF0306 protein YE0465 (147 aa).

The protein belongs to the UPF0306 family.

The polypeptide is UPF0306 protein YE0465 (Yersinia enterocolitica serotype O:8 / biotype 1B (strain NCTC 13174 / 8081)).